A 213-amino-acid chain; its full sequence is Proton-translocating ferredoxin:NAD(+) oxidoreductase complex subunit E (213 aa).

A run of 6 helical transmembrane segments spans residues 11-31 (GLIA…ALAT), 39-59 (FTMG…VSII), 69-89 (VPVY…VMQA), 93-113 (LLYK…IILA), 128-148 (FFDG…IGMI), and 170-190 (ALIM…VAIV).

This sequence belongs to the NqrDE/RnfAE family. In terms of assembly, the complex is composed of six subunits: RnfA, RnfB, RnfC, RnfD, RnfE and RnfG.

The protein resides in the cell membrane. Part of a membrane-bound complex that couples electron transfer with translocation of ions across the membrane. Couples electron transfer from reduced ferredoxin to NAD(+) with translocation of H(+) out of the cell. Essential for energy conservation during autotrophic growth. Contributes to ATP synthesis during heterotrophic growth. In Clostridium ljungdahlii (strain ATCC 55383 / DSM 13528 / PETC), this protein is Proton-translocating ferredoxin:NAD(+) oxidoreductase complex subunit E.